Consider the following 719-residue polypeptide: DNA ligase (719 aa).

NAD(+)-binding positions include 42-46 (DAEYD), 91-92 (SL), and E125. K127 serves as the catalytic N6-AMP-lysine intermediate. R148, E184, K300, and K324 together coordinate NAD(+). Residues C429, C432, C447, and C453 each contribute to the Zn(2+) site. A BRCT domain is found at 638–719 (TASSPIAGKT…WLQLIEGSYI (82 aa)).

The protein belongs to the NAD-dependent DNA ligase family. LigA subfamily. The cofactor is Mg(2+). Requires Mn(2+) as cofactor.

It catalyses the reaction NAD(+) + (deoxyribonucleotide)n-3'-hydroxyl + 5'-phospho-(deoxyribonucleotide)m = (deoxyribonucleotide)n+m + AMP + beta-nicotinamide D-nucleotide.. Functionally, DNA ligase that catalyzes the formation of phosphodiester linkages between 5'-phosphoryl and 3'-hydroxyl groups in double-stranded DNA using NAD as a coenzyme and as the energy source for the reaction. It is essential for DNA replication and repair of damaged DNA. The chain is DNA ligase from Bartonella quintana (strain Toulouse) (Rochalimaea quintana).